Reading from the N-terminus, the 930-residue chain is Translation initiation factor IF-2 (930 aa).

A disordered region spans residues 31 to 317 (FVKSASSTVE…RKSKRAKRAE (287 aa)). Low complexity predominate over residues 61–78 (PAAGASNGAPAKPSAPGA). Pro residues-rich tracts occupy residues 79–99 (RPGPRPGPPAPAQPKEPPAPA) and 108–120 (PAAPAPPAAPPAP). Low complexity predominate over residues 121-135 (AASAAPPSAPEAPSA). Pro residues-rich tracts occupy residues 136–158 (RPTPGPRPGPGGPKPGAPKPAPR) and 178–192 (PRPQGPAGPGGPRPG). Over residues 193–205 (PGAGGPRPGGGPR) the composition is skewed to gly residues. The span at 212-242 (NMPPRPVGGPRPGGGPRPGGGPRPGAGPRPT) shows a compositional bias: pro residues. Gly residues predominate over residues 244-301 (GGAGRPGGGGGGNYRGGGAGGGGGAGGAAAGGFRGRPGGGGGRPGQRGGAAGAFGRPG). A compositionally biased stretch (basic residues) spans 305–314 (KRGRKSKRAK). A tr-type G domain is found at 426-598 (FRPPVVTVMG…VVLTADASLD (173 aa)). The tract at residues 435–442 (GHVDHGKT) is G1. 435–442 (GHVDHGKT) contributes to the GTP binding site. Positions 460–464 (GITQH) are G2. Residues 485 to 488 (DTPG) form a G3 region. Residues 485 to 489 (DTPGH) and 539 to 542 (NKID) each bind GTP. The tract at residues 539–542 (NKID) is G4. Residues 575–577 (SAK) form a G5 region.

The protein belongs to the TRAFAC class translation factor GTPase superfamily. Classic translation factor GTPase family. IF-2 subfamily.

It is found in the cytoplasm. Functionally, one of the essential components for the initiation of protein synthesis. Protects formylmethionyl-tRNA from spontaneous hydrolysis and promotes its binding to the 30S ribosomal subunits. Also involved in the hydrolysis of GTP during the formation of the 70S ribosomal complex. The sequence is that of Translation initiation factor IF-2 from Mycolicibacterium gilvum (strain PYR-GCK) (Mycobacterium gilvum (strain PYR-GCK)).